The following is a 135-amino-acid chain: Small ribosomal subunit protein bS6 (135 aa).

The tract at residues 104–135 (FSRLDRNGHIGHDEKHPRSPSRQREDVIEGVE) is disordered.

It belongs to the bacterial ribosomal protein bS6 family.

Binds together with bS18 to 16S ribosomal RNA. The polypeptide is Small ribosomal subunit protein bS6 (Bartonella henselae (strain ATCC 49882 / DSM 28221 / CCUG 30454 / Houston 1) (Rochalimaea henselae)).